The sequence spans 241 residues: Ribosomal RNA large subunit methyltransferase E (241 aa).

Positions 88, 90, 111, 127, and 151 each coordinate S-adenosyl-L-methionine. Residue Lys191 is the Proton acceptor of the active site.

It belongs to the class I-like SAM-binding methyltransferase superfamily. RNA methyltransferase RlmE family.

Its subcellular location is the cytoplasm. The enzyme catalyses uridine(2552) in 23S rRNA + S-adenosyl-L-methionine = 2'-O-methyluridine(2552) in 23S rRNA + S-adenosyl-L-homocysteine + H(+). In terms of biological role, specifically methylates the uridine in position 2552 of 23S rRNA at the 2'-O position of the ribose in the fully assembled 50S ribosomal subunit. The polypeptide is Ribosomal RNA large subunit methyltransferase E (Bartonella quintana (strain Toulouse) (Rochalimaea quintana)).